Reading from the N-terminus, the 746-residue chain is PAN2-PAN3 deadenylation complex subunit pan3 (746 aa).

The segment at 7–35 adopts a C3H1-type zinc-finger fold; it reads PKNQKQCKNIALHGYCRNSDKCEFSHELT. The span at 64–97 shows a compositional bias: low complexity; sequence QQQQQQQNSNGNGSNNTATSNNPIISPNSNIASP. 3 disordered regions span residues 64-100, 169-205, and 219-275; these read QQQQQQQNSNGNGSNNTATSNNPIISPNSNIASPLKK, DDQHLYPYGDNSVDDYEQHQYEPQPQPNNGIDPNMNN, and NASP…PSLQ. Residues 196–205 are compositionally biased toward polar residues; it reads NNGIDPNMNN. Over residues 221-275 the composition is skewed to low complexity; the sequence is SPQSYQQQFQQPNPSPQSSSQQQQQQQQQQQQAVYQQQQQQQPSSQPLAQNPSLQ. The tract at residues 351–610 is pseudokinase domain; it reads DPNDPRIKNI…NIDEVVLMIS (260 aa). ATP is bound by residues arginine 407, 457–464, and 509–510; these read EFFPGSET and SK. Residues 611–649 are a coiled coil; sequence GRLLQENNYLHTYTDDLETELSKEYENGRLFRLVTKLGF. Residues 650-746 form a knob domain region; sequence INERPLYDMD…SELVSQKSHI (97 aa).

Belongs to the protein kinase superfamily. PAN3 family. As to quaternary structure, homodimer. Forms a heterotrimer with a catalytic subunit PAN2 to form the poly(A)-nuclease (PAN) deadenylation complex. Interacts (via PAM-2 motif) with poly(A)-binding protein (via PABC domain), conferring substrate specificity of the enzyme complex.

It is found in the cytoplasm. Regulatory subunit of the poly(A)-nuclease (PAN) deadenylation complex, one of two cytoplasmic mRNA deadenylases involved in mRNA turnover. PAN specifically shortens poly(A) tails of RNA and the activity is stimulated by poly(A)-binding protein (PABP). PAN deadenylation is followed by rapid degradation of the shortened mRNA tails by the CCR4-NOT complex. Deadenylated mRNAs are then degraded by two alternative mechanisms, namely exosome-mediated 3'-5' exonucleolytic degradation, or deadenylation-dependent mRNA decaping and subsequent 5'-3' exonucleolytic degradation by XRN1. PAN3 acts as a positive regulator for PAN activity, recruiting the catalytic subunit PAN2 to mRNA via its interaction with RNA and PABP. The protein is PAN2-PAN3 deadenylation complex subunit pan3 of Dictyostelium discoideum (Social amoeba).